Here is a 365-residue protein sequence, read N- to C-terminus: Peptide chain release factor 2 (365 aa).

At Gln252 the chain carries N5-methylglutamine.

It belongs to the prokaryotic/mitochondrial release factor family. Post-translationally, methylated by PrmC. Methylation increases the termination efficiency of RF2.

It localises to the cytoplasm. Its function is as follows. Peptide chain release factor 2 directs the termination of translation in response to the peptide chain termination codons UGA and UAA. This chain is Peptide chain release factor 2, found in Tolumonas auensis (strain DSM 9187 / NBRC 110442 / TA 4).